The primary structure comprises 583 residues: Undecaprenyl phosphate-alpha-4-amino-4-deoxy-L-arabinose arabinosyl transferase 2 (583 aa).

The segment at M1–A20 is disordered. Helical transmembrane passes span L42–I62, L113–T135, S145–S165, N166–L186, F209–I229, G241–A261, W290–G310, Q321–S341, L345–I365, S380–T400, M409–P429, and P440–V460.

The protein belongs to the glycosyltransferase 83 family.

The protein resides in the cell inner membrane. The catalysed reaction is 4-amino-4-deoxy-alpha-L-arabinopyranosyl di-trans,octa-cis-undecaprenyl phosphate + lipid IVA = lipid IIA + di-trans,octa-cis-undecaprenyl phosphate.. Its pathway is lipopolysaccharide metabolism; 4-amino-4-deoxy-beta-L-arabinose-lipid A biosynthesis. Catalyzes the transfer of the L-Ara4N moiety of the glycolipid undecaprenyl phosphate-alpha-L-Ara4N to lipid A. The modified arabinose is attached to lipid A and is required for resistance to polymyxin and cationic antimicrobial peptides. This is Undecaprenyl phosphate-alpha-4-amino-4-deoxy-L-arabinose arabinosyl transferase 2 from Pseudomonas fluorescens (strain ATCC BAA-477 / NRRL B-23932 / Pf-5).